Reading from the N-terminus, the 790-residue chain is Nuclear cap-binding protein subunit 1 (790 aa).

The segment at 1–26 is disordered; sequence MSRRRHSDENDGGQPHKRRKTSDANE. A Nuclear localization signal motif is present at residues 3–20; the sequence is RRRHSDENDGGQPHKRRK. Position 7 is a phosphoserine; by RPS6KB1 (Ser-7). The residue at position 21 (Thr-21) is a Phosphothreonine; by RPS6KB1. At Ser-22 the chain carries Phosphoserine; by RPS6KB1. Positions 28 to 240 constitute an MIF4G domain; the sequence is EDHLESLICK…CLWAQIQKLK (213 aa). Residue Ser-201 is modified to Phosphoserine. Residue Lys-204 is modified to N6-acetyllysine. Positions 643 to 713 form a coiled coil; the sequence is STIRKMNKHV…SEQKNLFLVI (71 aa). Lys-684 participates in a covalent cross-link: Glycyl lysine isopeptide (Lys-Gly) (interchain with G-Cter in SUMO2). Lys-698 is subject to N6-acetyllysine.

It belongs to the NCBP1 family. In terms of assembly, component of the nuclear cap-binding complex (CBC), a heterodimer composed of NCBP1/CBP80 and NCBP2/CBP20 that interacts with m7GpppG-capped RNA. Found in a U snRNA export complex containing PHAX/RNUXA, NCBP1/CBP80, NCBP2/CBP20, RAN, XPO1 and m7G-capped RNA. Identified in a IGF2BP1-dependent mRNP granule complex containing untranslated mRNAs. Interacts with PHAX/RNUXA, SRRT/ARS2, EIF4G2, IGF2BP1, HNRNPF, HNRNPH1, KIAA0427/CTIF, PARN, DROSHA, UPF1 and ALYREF/THOC4. May interact with EIF4G1; the interaction is however controversial since it is reported by PubMed:11340157, PubMed:15059963 and PubMed:15361857, but is not observed by PubMed:19648179. The large PER complex involved in the repression of transcriptional termination is composed of at least PER2, CDK9, DDX5, DHX9, NCBP1/CBP80 and POLR2A. Component of an alternative nuclear cap-binding complex (CBC) composed of NCBP1/CBP80 and NCBP3. Interacts with METTL3. Interacts with ZFC3H1 in a RNase-insensitive manner. Interacts with MTREX. Interacts with TASOR. Interacts with DHX34; the interaction is RNA-dependent. Interacts with KPNA3. In terms of processing, dephosphorylated at Thr-21 by the PNUTS-PP1 complex during RNA polymerase II transcription pause-release.

The protein resides in the nucleus. It localises to the cytoplasm. Functionally, component of the cap-binding complex (CBC), which binds cotranscriptionally to the 5'-cap of pre-mRNAs and is involved in various processes such as pre-mRNA splicing, translation regulation, nonsense-mediated mRNA decay, RNA-mediated gene silencing (RNAi) by microRNAs (miRNAs) and mRNA export. The CBC complex is involved in mRNA export from the nucleus via its interaction with ALYREF/THOC4/ALY, leading to the recruitment of the mRNA export machinery to the 5'-end of mRNA and to mRNA export in a 5' to 3' direction through the nuclear pore. The CBC complex is also involved in mediating U snRNA and intronless mRNAs export from the nucleus. The CBC complex is essential for a pioneer round of mRNA translation, before steady state translation when the CBC complex is replaced by cytoplasmic cap-binding protein eIF4E. The pioneer round of mRNA translation mediated by the CBC complex plays a central role in nonsense-mediated mRNA decay (NMD), NMD only taking place in mRNAs bound to the CBC complex, but not on eIF4E-bound mRNAs. The CBC complex enhances NMD in mRNAs containing at least one exon-junction complex (EJC) via its interaction with UPF1, promoting the interaction between UPF1 and UPF2. The CBC complex is also involved in 'failsafe' NMD, which is independent of the EJC complex, while it does not participate in Staufen-mediated mRNA decay (SMD). During cell proliferation, the CBC complex is also involved in microRNAs (miRNAs) biogenesis via its interaction with SRRT/ARS2 and is required for miRNA-mediated RNA interference. The CBC complex also acts as a negative regulator of PARN, thereby acting as an inhibitor of mRNA deadenylation. In the CBC complex, NCBP1/CBP80 does not bind directly capped RNAs (m7GpppG-capped RNA) but is required to stabilize the movement of the N-terminal loop of NCBP2/CBP20 and lock the CBC into a high affinity cap-binding state with the cap structure. Associates with NCBP3 to form an alternative cap-binding complex (CBC) which plays a key role in mRNA export and is particularly important in cellular stress situations such as virus infections. The conventional CBC with NCBP2 binds both small nuclear RNA (snRNA) and messenger (mRNA) and is involved in their export from the nucleus whereas the alternative CBC with NCBP3 does not bind snRNA and associates only with mRNA thereby playing a role only in mRNA export. NCBP1/CBP80 is required for cell growth and viability. This is Nuclear cap-binding protein subunit 1 (NCBP1) from Homo sapiens (Human).